The primary structure comprises 861 residues: MIGQITSGLFGGPDDSKKLKGTVVMMNKNALDFTDLAGSLTDKAFEFLGQTVSFQLISSVQGDPTNGLQGKHSNPAYLENSLFTLTPLTAGSETAFGVTFDWNEEFGVPGAFIIKNTHINEFFLKSLTLEDVPNHGKVHFVCNSWVYPSFRYKSDRIFFVNQPYLPSKTPELLRKYRENELLTLRGDGTGKREAWDRIYDYDIYNDLGNPDEGKENVRTTLGGSAEYPYPRRGRTGRPPTRTDPKSESRIPLILSLDIYVPRDERFGHLKMSDFLTYALKSIVQFILPELHALFDGTPNEFDSFEDVLRLYEGGIKLPQGPLFKALTAAIPLEMIRELLRTDGEGILRFPTPLVIKDSKTAWRTDEEFAREMLAGVNPVIISRLQEFPPKSKLDPEAYGNQNSTITAEHIEDKLDGLTVDEAMNNNKLFILNHHDVLIPYLRRINTTTTKTYASRTLLFLQDNGSLKPLAIELSLPHPDGDQFGVTSKVYTPSDQGVESSIWQLAKAYVAVNDSGVHQLISHWLNTHAVIEPFVIATNRQLSVLHPIHKLLYPHFRDTMNINAMARQILINAGGVLESTVFQSKFAMEMSAVVYKDWVFPDQALPADLVKRGVAVEDSSSPHGVRLLIEDYPYAVDGLEIWSAIKSWVSDYCSFYYGSDEEILKDNELQAWWKELREVGHGDKKNEPWWPEMERPQELIDSCTTIIWIASALHAAVNFGQYPYAGYLPNRPTVSRRFMPEPGTPEYEELKKNPDKAFLKTITAQLQTLLGVSLIEILSRHTTDEIYLGQRESPEWTKDKEPLAAFDKFGKKLTDIEKQIIQRNGDNILTNRSGPVNAPYTLLFPTSEGGLTGKGIPNSVSI.

Residues Asn29–Val160 enclose the PLAT domain. Positions Pro163 to Ile861 constitute a Lipoxygenase domain. The disordered stretch occupies residues Glu212–Ser246. Residues His522, His527, His713, Asn717, and Ile861 each contribute to the Fe cation site.

Belongs to the lipoxygenase family. As to quaternary structure, monomer. Requires Fe cation as cofactor. Highly expressed in tubers and roots. Detected in flower buds and leaves.

It is found in the cytoplasm. The catalysed reaction is (9Z,12Z)-octadecadienoate + O2 = (9S)-hydroperoxy-(10E,12Z)-octadecadienoate. Its pathway is lipid metabolism; oxylipin biosynthesis. Its function is as follows. Plant lipoxygenases may be involved in a number of diverse aspects of plant physiology including growth and development, pest resistance, and senescence or responses to wounding. Catalyzes the hydroperoxidation of lipids containing a cis,cis-1,4-pentadiene structure. Linoleic acid is the preferred substrate, but is also active with linolenic and arachidonic acids. This Solanum tuberosum (Potato) protein is Linoleate 9S-lipoxygenase 2 (LOX1.2).